A 276-amino-acid polypeptide reads, in one-letter code: Undecaprenyl-diphosphatase 2 (276 aa).

A run of 8 helical transmembrane segments spans residues 4-24 (IEAL…VSSL), 44-64 (DFLP…LIYF), 87-107 (ARLM…GLLL), 114-134 (LFAS…LLLW), 150-170 (LSFA…LPGF), 193-213 (FSFL…IPKL), 225-245 (LLLA…WFLM), and 256-276 (LRPF…FKLV).

This sequence belongs to the UppP family.

Its subcellular location is the cell inner membrane. The enzyme catalyses di-trans,octa-cis-undecaprenyl diphosphate + H2O = di-trans,octa-cis-undecaprenyl phosphate + phosphate + H(+). Catalyzes the dephosphorylation of undecaprenyl diphosphate (UPP). Confers resistance to bacitracin. This chain is Undecaprenyl-diphosphatase 2, found in Chromobacterium violaceum (strain ATCC 12472 / DSM 30191 / JCM 1249 / CCUG 213 / NBRC 12614 / NCIMB 9131 / NCTC 9757 / MK).